The following is a 628-amino-acid chain: Siderophore iron transporter 1 (628 aa).

The next 14 helical transmembrane spans lie at 68–88 (IYRVALFFSLFLIAYAYGLDG), 107–127 (LLSTVNCIKTVIAAVGQIFFA), 132–152 (IFGRFSIMIVSIIFYSMGTII), 164–184 (VGGCFYQLGLTGIILILEVIA), 194–214 (LLALFIPALPFIINTWISGNV), 225–245 (GIGMWAFILPLACIPLGICML), 285–305 (IIGMLLITVFFGCVLVPFTLA), 317–337 (IIVPEVIGWVVVLPLYMLWEI), 354–374 (GIFFALLIAFFINFNWYMQGD), 394–414 (ITSLYSFVSVIVGTILGFILI), 420–440 (KPFIIFGISCWIVSFGLLVHY), 448–468 (SGIIGSLCLLGFGAGSFTYVT), 488–508 (LYLATYNIGSAFGSSVSGAVW), and 559–579 (KILCIIGLVFCFPLLGCAFML).

Belongs to the major facilitator superfamily.

The protein localises to the endosome membrane. Its function is as follows. Involved in the transport of siderophore ferrioxamine B and so has a role in iron homeostasis. The sequence is that of Siderophore iron transporter 1 (SIT1) from Saccharomyces cerevisiae (strain ATCC 204508 / S288c) (Baker's yeast).